Here is a 923-residue protein sequence, read N- to C-terminus: Meiotic recombination protein rec11 (923 aa).

An SCD domain is found at 278–365; that stretch reads LFSRIHDIRA…DRFSLRIVEI (88 aa).

The chain is Meiotic recombination protein rec11 (rec11) from Schizosaccharomyces pombe (strain 972 / ATCC 24843) (Fission yeast).